A 297-amino-acid polypeptide reads, in one-letter code: Iron-sulfur cluster assembly SufBD family protein ycf24 (297 aa).

It belongs to the iron-sulfur cluster assembly SufBD family.

The protein resides in the plastid. It localises to the chloroplast. This Antithamnion sp. (Red alga) protein is Iron-sulfur cluster assembly SufBD family protein ycf24 (ycf24).